The chain runs to 634 residues: SPARC-like protein 1 (634 aa).

The signal sequence occupies residues 1–16 (MKAVLLLLYALGIAAA). Residues 50-335 (ADIEKHPNHK…DDSKHGASDD (286 aa)) are disordered. Basic and acidic residues predominate over residues 51 to 62 (DIEKHPNHKAEK). Phosphoserine is present on residues Ser-68, Ser-76, and Ser-84. A compositionally biased stretch (basic and acidic residues) spans 73-83 (HEQSTEQDKTY). The span at 89–99 (LKDEEDGDGDL) shows a compositional bias: acidic residues. Polar residues predominate over residues 131–144 (TVSTPFVDSDQPAN). N-linked (GlcNAc...) asparagine glycosylation is present at Asn-144. Residues Ser-151 and Ser-159 each carry the phosphoserine modification. Acidic residues-rich tracts occupy residues 189–198 (EKEEEEDPED) and 205–214 (NQEEEKEPPE). A compositionally biased stretch (polar residues) spans 233–258 (QESSQPTQISKTKNDFEQGSQGQEGD). Ser-259 carries the phosphoserine modification. 2 stretches are compositionally biased toward basic and acidic residues: residues 263–276 (GEDK…HLPH) and 292–303 (GNRKDTDEEKAV). Ser-333 and Ser-340 each carry phosphoserine. The tract at residues 360–398 (EETPDESENRSEAGDNQGAKKAESSPNAEPSDEGNSRGH) is disordered. Residues 366 to 382 (SENRSEAGDNQGAKKAE) show a composition bias toward basic and acidic residues. Asn-368 is a glycosylation site (N-linked (GlcNAc...) asparagine). Phosphoserine is present on residues Ser-370 and Ser-390. The Follistatin-like domain occupies 402-424 (SCMNFQCKRGHTCKTDQHGKPHC). Intrachain disulfides connect Cys-403-Cys-414, Cys-408-Cys-424, Cys-426-Cys-460, Cys-432-Cys-453, Cys-442-Cys-479, Cys-485-Cys-596, and Cys-604-Cys-620. Residues 420–481 (GKPHCVCQDP…QLDYFGACKS (62 aa)) form the Kazal-like domain. An N-linked (GlcNAc...) asparagine glycan is attached at Asn-446. The 36-residue stretch at 592–627 (PMEHCITRFFEECDPNKDKHITLKEWGHCFGIKEED) folds into the EF-hand domain. Ca(2+) is bound by residues Asp-605, Asn-607, Asp-609, His-611, and Glu-616.

It belongs to the SPARC family. Expressed in many types of neurons in the brain.

It is found in the secreted. Its subcellular location is the extracellular space. The protein resides in the extracellular matrix. The polypeptide is SPARC-like protein 1 (Sparcl1) (Rattus norvegicus (Rat)).